Here is a 312-residue protein sequence, read N- to C-terminus: Methionyl-tRNA formyltransferase (312 aa).

Residue 112–115 (SLLP) coordinates (6S)-5,6,7,8-tetrahydrofolate.

The protein belongs to the Fmt family.

It carries out the reaction L-methionyl-tRNA(fMet) + (6R)-10-formyltetrahydrofolate = N-formyl-L-methionyl-tRNA(fMet) + (6S)-5,6,7,8-tetrahydrofolate + H(+). Attaches a formyl group to the free amino group of methionyl-tRNA(fMet). The formyl group appears to play a dual role in the initiator identity of N-formylmethionyl-tRNA by promoting its recognition by IF2 and preventing the misappropriation of this tRNA by the elongation apparatus. The chain is Methionyl-tRNA formyltransferase from Dehalococcoides mccartyi (strain ATCC BAA-2266 / KCTC 15142 / 195) (Dehalococcoides ethenogenes (strain 195)).